Consider the following 318-residue polypeptide: Ribosomal RNA small subunit methyltransferase H (318 aa).

S-adenosyl-L-methionine-binding positions include 38–40 (GGH), Asp-58, Tyr-86, Asp-107, and Gln-114.

This sequence belongs to the methyltransferase superfamily. RsmH family.

Its subcellular location is the cytoplasm. The enzyme catalyses cytidine(1402) in 16S rRNA + S-adenosyl-L-methionine = N(4)-methylcytidine(1402) in 16S rRNA + S-adenosyl-L-homocysteine + H(+). In terms of biological role, specifically methylates the N4 position of cytidine in position 1402 (C1402) of 16S rRNA. In Methylibium petroleiphilum (strain ATCC BAA-1232 / LMG 22953 / PM1), this protein is Ribosomal RNA small subunit methyltransferase H.